Here is a 645-residue protein sequence, read N- to C-terminus: Serine/threonine-protein kinase BUR1 (645 aa).

Residues 55–379 enclose the Protein kinase domain; the sequence is YREEEKLGQG…AMKAKKHPFF (325 aa). ATP contacts are provided by residues 61 to 69 and Lys-84; that span reads LGQGTFGEV. Asp-208 serves as the catalytic Proton acceptor. Disordered regions lie at residues 407 to 428, 442 to 513, and 533 to 645; these read EMNESMSQRPPSAPTGHTSTDN, ASIP…KYPA, and RYRN…ADYY. Composition is skewed to polar residues over residues 409–428 and 457–474; these read NESMSQRPPSAPTGHTSTDN and IPAQPSASRYNGAATQNI. A compositionally biased stretch (pro residues) spans 477 to 486; sequence EPIPTAPLPK. Over residues 578 to 598 the composition is skewed to polar residues; it reads NRYQNQDYNTSRNTGYNQYSQ.

Belongs to the protein kinase superfamily. CMGC Ser/Thr protein kinase family. CDC2/CDKX subfamily.

The protein resides in the nucleus. The catalysed reaction is L-seryl-[protein] + ATP = O-phospho-L-seryl-[protein] + ADP + H(+). The enzyme catalyses L-threonyl-[protein] + ATP = O-phospho-L-threonyl-[protein] + ADP + H(+). It catalyses the reaction [DNA-directed RNA polymerase] + ATP = phospho-[DNA-directed RNA polymerase] + ADP + H(+). Functionally, serine/threonine-protein kinase involved in transcription regulation. Phosphorylates the UBC2/RAD6 ubiquitin-conjugating enzyme (E2), leading to monoubiquitination of histone H2B and the silencing of telomeric-associated genes. Also required for histone H3 methylation. Necessary for the recovery from pheromone-induced growth arrest in the cell cycle G1 phase. The protein is Serine/threonine-protein kinase BUR1 (BUR1) of Kluyveromyces lactis (strain ATCC 8585 / CBS 2359 / DSM 70799 / NBRC 1267 / NRRL Y-1140 / WM37) (Yeast).